Here is a 55-residue protein sequence, read N- to C-terminus: Large ribosomal subunit protein bL33 (55 aa).

It belongs to the bacterial ribosomal protein bL33 family.

This Methylobacterium nodulans (strain LMG 21967 / CNCM I-2342 / ORS 2060) protein is Large ribosomal subunit protein bL33.